The chain runs to 505 residues: Poxin-Schlafen (505 aa).

Residues 1 to 238 form a poxin-like region; that stretch reads MAMFYAHAFG…SKEERVDYVL (238 aa). Histidine 17 functions as the Proton donor in the catalytic mechanism. Tyrosine 138 functions as the Shared with catalytic histidine of dimeric partner in the catalytic mechanism. Residue lysine 142 is the Proton acceptor; shared with catalytic histidine of dimeric partner of the active site. Positions 239–505 are schlafen-like; it reads MKRLESIRHL…PDEWVSHIKF (267 aa).

The protein in the N-terminal section; belongs to the poxin family. This sequence in the C-terminal section; belongs to the Schlafen protein family. Subgroup poxviridae B3 subfamily. As to quaternary structure, homodimer.

It carries out the reaction 2',3'-cGAMP + H2O = Gp(2'-5')Ap(3') + H(+). Nuclease that is responsible for viral evasion of host cGAS-STING innate immunity. Cleaves 2',3'-cGAMP which is produced by host cGAS following recognition of cytosolic DNA and blocks the subsequent 2',3'-cGAMP-mediated activation of TMEM173/STING, which normally spreads to adjacent cells and activates the interferon and NF-kappa-B immune responses. The sequence is that of Poxin-Schlafen (OPG188) from Bos taurus (Bovine).